A 208-amino-acid chain; its full sequence is Transmembrane protein 222 (208 aa).

The tract at residues 1–34 (MAEAEGSSPLLLQPPPPPPRMAEVETPTGAETDM) is disordered. Topologically, residues 1 to 55 (MAEAEGSSPLLLQPPPPPPRMAEVETPTGAETDMKQYHGSGGVVMDVERSRFPYC) are extracellular. A helical membrane pass occupies residues 56 to 76 (VVWTPIPVLTWFFPIIGHMGI). The Cytoplasmic portion of the chain corresponds to 77–164 (CTSAGVIRDF…MRYNNSTNWN (88 aa)). Residues 165–185 (MVTLCCFCLIYGKYVSVGAFV) traverse the membrane as a helical segment. Residue lysine 186 is a topological domain, extracellular. A helical transmembrane segment spans residues 187–207 (TWLPFVLLLGIILTVSLVFNL). Residue arginine 208 is a topological domain, cytoplasmic.

It localises to the membrane. It is found in the cell projection. Its subcellular location is the dendrite. In Mus musculus (Mouse), this protein is Transmembrane protein 222 (Tmem222).